Reading from the N-terminus, the 758-residue chain is 5-methyltetrahydropteroyltriglutamate--homocysteine methyltransferase (758 aa).

Residues 16-19 and lysine 112 each bind 5-methyltetrahydropteroyltri-L-glutamate; that span reads RELK. L-homocysteine is bound by residues 433 to 435 and glutamate 486; that span reads IGS. L-methionine contacts are provided by residues 433-435 and glutamate 486; that span reads IGS. Residues 517 to 518 and tryptophan 563 contribute to the 5-methyltetrahydropteroyltri-L-glutamate site; that span reads RC. Aspartate 601 provides a ligand contact to L-homocysteine. Aspartate 601 serves as a coordination point for L-methionine. Glutamate 607 contributes to the 5-methyltetrahydropteroyltri-L-glutamate binding site. 3 residues coordinate Zn(2+): histidine 643, cysteine 645, and glutamate 667. Residue histidine 696 is the Proton donor of the active site. Cysteine 728 contributes to the Zn(2+) binding site.

This sequence belongs to the vitamin-B12 independent methionine synthase family. The cofactor is Zn(2+).

It carries out the reaction 5-methyltetrahydropteroyltri-L-glutamate + L-homocysteine = tetrahydropteroyltri-L-glutamate + L-methionine. It functions in the pathway amino-acid biosynthesis; L-methionine biosynthesis via de novo pathway; L-methionine from L-homocysteine (MetE route): step 1/1. Catalyzes the transfer of a methyl group from 5-methyltetrahydrofolate to homocysteine resulting in methionine formation. In Neisseria meningitidis serogroup C / serotype 2a (strain ATCC 700532 / DSM 15464 / FAM18), this protein is 5-methyltetrahydropteroyltriglutamate--homocysteine methyltransferase.